We begin with the raw amino-acid sequence, 396 residues long: Phosphoglycerate kinase (396 aa).

Residues Asp21–Asn23, Arg37, His60–Arg63, Arg121, and Arg154 each bind substrate. Residues Lys205, Gly296, Glu327, and Gly353 to Ser356 each bind ATP.

Belongs to the phosphoglycerate kinase family. Monomer.

The protein resides in the cytoplasm. The enzyme catalyses (2R)-3-phosphoglycerate + ATP = (2R)-3-phospho-glyceroyl phosphate + ADP. It functions in the pathway carbohydrate degradation; glycolysis; pyruvate from D-glyceraldehyde 3-phosphate: step 2/5. The chain is Phosphoglycerate kinase from Anaeromyxobacter dehalogenans (strain 2CP-C).